The primary structure comprises 178 residues: Small ribosomal subunit protein uS5 (178 aa).

In terms of domain architecture, S5 DRBM spans 15–78 (FEEKIIEIRR…SAAKRNIVEV (64 aa)).

Belongs to the universal ribosomal protein uS5 family. As to quaternary structure, part of the 30S ribosomal subunit. Contacts proteins S4 and S8.

Its function is as follows. With S4 and S12 plays an important role in translational accuracy. In terms of biological role, located at the back of the 30S subunit body where it stabilizes the conformation of the head with respect to the body. The protein is Small ribosomal subunit protein uS5 of Thermotoga maritima (strain ATCC 43589 / DSM 3109 / JCM 10099 / NBRC 100826 / MSB8).